A 163-amino-acid chain; its full sequence is NADH-quinone oxidoreductase subunit I (163 aa).

2 consecutive 4Fe-4S ferredoxin-type domains span residues 53 to 83 (LRRY…IEAG) and 94 to 123 (TLYD…LTPE). C63, C66, C69, C73, C103, C106, C109, and C113 together coordinate [4Fe-4S] cluster.

Belongs to the complex I 23 kDa subunit family. As to quaternary structure, NDH-1 is composed of 14 different subunits. Subunits NuoA, H, J, K, L, M, N constitute the membrane sector of the complex. [4Fe-4S] cluster is required as a cofactor.

It localises to the cell inner membrane. The catalysed reaction is a quinone + NADH + 5 H(+)(in) = a quinol + NAD(+) + 4 H(+)(out). NDH-1 shuttles electrons from NADH, via FMN and iron-sulfur (Fe-S) centers, to quinones in the respiratory chain. The immediate electron acceptor for the enzyme in this species is believed to be ubiquinone. Couples the redox reaction to proton translocation (for every two electrons transferred, four hydrogen ions are translocated across the cytoplasmic membrane), and thus conserves the redox energy in a proton gradient. The chain is NADH-quinone oxidoreductase subunit I from Coxiella burnetii (strain Dugway 5J108-111).